Here is a 372-residue protein sequence, read N- to C-terminus: Peroxisomal biogenesis factor 3 (372 aa).

Topologically, residues M1–K15 are cytoplasmic. Residues M1–A45 are targeting to peroxisomes. The chain crosses the membrane as a helical span at residues C16–K36. Residues L37–I116 lie on the Peroxisomal side of the membrane. Residues V117–I140 traverse the membrane as a helical segment. Positions Y120–I136 are interaction with PEX19. The Cytoplasmic portion of the chain corresponds to Y141–K372.

The protein belongs to the peroxin-3 family. In terms of assembly, interacts with PEX19.

It localises to the peroxisome membrane. Involved in peroxisome biosynthesis and integrity. Assembles membrane vesicles before the matrix proteins are translocated. As a docking factor for PEX19, is necessary for the import of peroxisomal membrane proteins in the peroxisomes. This chain is Peroxisomal biogenesis factor 3 (Pex3), found in Rattus norvegicus (Rat).